A 110-amino-acid chain; its full sequence is MTSIAKAFVEKAISNNPVTVFSKSFCPFCKAAKNTLTKYSAPYKAYELDKIENGSDIQAYLHEKTKQSTVPSIFFRNQFIGGNSDLNKLRSSGTLTKMIAELKENKSSIL.

The region spanning 6 to 106 is the Glutaredoxin domain; it reads KAFVEKAISN…KMIAELKENK (101 aa). The cysteines at positions 26 and 29 are disulfide-linked.

The protein belongs to the glutaredoxin family.

The disulfide bond functions as an electron carrier in the glutathione-dependent synthesis of deoxyribonucleotides by the enzyme ribonucleotide reductase. In addition, it is also involved in reducing some disulfides in a coupled system with glutathione reductase. Thioltransferase catalyzes cellular thiol-disulfide transhydrogenation reactions. It transfers reducing equivalents to cytosolic protein and nonprotein disulfides. The protein is Glutaredoxin-2 (grx2) of Schizosaccharomyces pombe (strain 972 / ATCC 24843) (Fission yeast).